A 301-amino-acid chain; its full sequence is ATP synthase gamma chain (301 aa).

Belongs to the ATPase gamma chain family. F-type ATPases have 2 components, CF(1) - the catalytic core - and CF(0) - the membrane proton channel. CF(1) has five subunits: alpha(3), beta(3), gamma(1), delta(1), epsilon(1). CF(0) has three main subunits: a, b and c.

The protein resides in the cell inner membrane. Functionally, produces ATP from ADP in the presence of a proton gradient across the membrane. The gamma chain is believed to be important in regulating ATPase activity and the flow of protons through the CF(0) complex. The chain is ATP synthase gamma chain from Helicobacter pylori (strain J99 / ATCC 700824) (Campylobacter pylori J99).